A 440-amino-acid polypeptide reads, in one-letter code: Protein TENP (440 aa).

Expressed in developing retina and brain, but not in heart, liver or kidney. In brain, located in a narrow strip in the boundary between the ventricular zone (consisting of proliferating cells) and the intermediate zone (consisting of postmitotic, differentiating cells). Expressed in all major regions of the developing brain, including the myelencephalon, the mesencephalon, the telencephalon and the diencephalon. In the developing retina, expression is scattered across the retinal neural epithelium. Expressed in egg white (at protein level). Expressed in the magnum of the oviduct (at protein level).

May play a role in the developmental transition from cell proliferation to cell differentiation during neurogenesis. The polypeptide is Protein TENP (TENP) (Gallus gallus (Chicken)).